A 582-amino-acid polypeptide reads, in one-letter code: MKLNFKIKDKKTLKRLKKGGFWALGLFGAAINAFSAVLIVNEVLRLQSGETLIASGRSGNLSFQLYSKVNQNAKSKLNSISLTDGGYRSEIDLGDGSNFREDFRNFANNLSEAITDAPKDLLRPVPKVEVSGLIKTSSTFITPNFKAGYYDQVAADGKTLKYYQSTEYFNNRVVMPILQTTNGTLTANNRAYDDIFVDQGVPKFPGWFHDVDKAYYAGSNGQSEYLFKEWNYYVANGSPLYNVYPNHHFKQIKTIAFDAPRIKQGNTDGINLNLKQRNPDYVIINGLTGDGSTLKDLELPESVKKVSIYGDYHSINVAKQIFKNVLELEFYSTNQDNNFGFNPLVLGDHTNIIYDLFASKPFNYIDLTSLELKDNQDNIDASKLKRAVSDIYIRRRFERQMQGYWAGGYIDRYLVKNTNEKNVNKDNDTVYAALKDINLHLEETYTHGGNTMYRVNENYYPGASAYEAERATRDSEFQKEIVQRAELIGVVFEYGVKNLRPGLKYTVKFESPQEQVALKSTDKFQPVIGSVTDMSKSVTDLIGVLRDNAEILNITNVSKDETVVAELKEKLDRENVFQEIRT.

A helical membrane pass occupies residues glycine 20 to valine 40.

It localises to the membrane. This is an uncharacterized protein from Mycoplasma pneumoniae (strain ATCC 29342 / M129 / Subtype 1) (Mycoplasmoides pneumoniae).